The following is a 368-amino-acid chain: MKAVLGLEDGTVIRGTGFGAEGTACGELVFTTQFTGYEEALTDPSYKGQILMFTYPLIGNYGVSGERFQSDNIHAEGLVVREACKKPYHYKSTRSIHQFLEDEGKPGIEGVDTRMLTIGARERGTMRAALITGSDDGEEAVKVARNFPQITDEELIARVTCKEPHFIPGAECAWKGSGKPKHAVVVDLGIKRNIINNLHKRGIDLTLVPATTKPKEIAGFEPDLLFISNGPGDPEKATDAINAVKAFAGTIPVAGICFGHQIISLAMGARTYKLKFGHRGGNQPVKDLIENKIFISSQNHGYAVDADSLEGTGLYVKYLNANDKTVEGVSHKDLDIFSVQFHPEAQAGPMDTEETFFGKVVKVLGGDL.

Positions 1-178 are CPSase; that stretch reads MKAVLGLEDG…GAECAWKGSG (178 aa). L-glutamine contacts are provided by Ser45, Gly230, and Gly232. The region spanning 182–368 is the Glutamine amidotransferase type-1 domain; sequence HAVVVDLGIK…KVVKVLGGDL (187 aa). Cys257 functions as the Nucleophile in the catalytic mechanism. Positions 258, 261, 299, 301, and 302 each coordinate L-glutamine. Residues His342 and Glu344 contribute to the active site.

This sequence belongs to the CarA family. As to quaternary structure, composed of two chains; the small (or glutamine) chain promotes the hydrolysis of glutamine to ammonia, which is used by the large (or ammonia) chain to synthesize carbamoyl phosphate. Tetramer of heterodimers (alpha,beta)4.

It carries out the reaction hydrogencarbonate + L-glutamine + 2 ATP + H2O = carbamoyl phosphate + L-glutamate + 2 ADP + phosphate + 2 H(+). The catalysed reaction is L-glutamine + H2O = L-glutamate + NH4(+). The protein operates within amino-acid biosynthesis; L-arginine biosynthesis; carbamoyl phosphate from bicarbonate: step 1/1. It functions in the pathway pyrimidine metabolism; UMP biosynthesis via de novo pathway; (S)-dihydroorotate from bicarbonate: step 1/3. Small subunit of the glutamine-dependent carbamoyl phosphate synthetase (CPSase). CPSase catalyzes the formation of carbamoyl phosphate from the ammonia moiety of glutamine, carbonate, and phosphate donated by ATP, constituting the first step of 2 biosynthetic pathways, one leading to arginine and/or urea and the other to pyrimidine nucleotides. The small subunit (glutamine amidotransferase) binds and cleaves glutamine to supply the large subunit with the substrate ammonia. In Methanosarcina acetivorans (strain ATCC 35395 / DSM 2834 / JCM 12185 / C2A), this protein is Carbamoyl phosphate synthase small chain.